A 120-amino-acid polypeptide reads, in one-letter code: Large ribosomal subunit protein uL22 (120 aa).

It belongs to the universal ribosomal protein uL22 family. In terms of assembly, part of the 50S ribosomal subunit.

Its function is as follows. This protein binds specifically to 23S rRNA; its binding is stimulated by other ribosomal proteins, e.g. L4, L17, and L20. It is important during the early stages of 50S assembly. It makes multiple contacts with different domains of the 23S rRNA in the assembled 50S subunit and ribosome. The globular domain of the protein is located near the polypeptide exit tunnel on the outside of the subunit, while an extended beta-hairpin is found that lines the wall of the exit tunnel in the center of the 70S ribosome. The protein is Large ribosomal subunit protein uL22 of Corynebacterium urealyticum (strain ATCC 43042 / DSM 7109).